A 421-amino-acid chain; its full sequence is Vinorine synthase (421 aa).

Catalysis depends on proton acceptor residues H160 and D362.

It belongs to the plant acyltransferase family. As to quaternary structure, monomer. In terms of tissue distribution, mainly expressed in roots and, to a lower level, in leaves.

It catalyses the reaction 16-epivellosimine + acetyl-CoA = vinorine + CoA. The protein operates within alkaloid biosynthesis; ajmaline biosynthesis. With respect to regulation, complete inhibition by 4-(2-aminoethyl)-benzenesulfonyl fluoride (AEBSF), N-tosyl-L-phenylalanine chloromethylketone (TPCK), Hg(2+) and diethyl-pyrocarbonate (DEPC). 50% inhibition by N-(N-(L-3-trans-carboxirane-2-carbonyl)-L-leucyl)-agmanitine (E-64), N-alpha-p-tosyl-L-lysine chloromethylketone (TLCK) and phenylmethylsulfonyl fluoride (PMSF). Its function is as follows. Acetyltransferase involved in the biosynthesis of ajmaline-type monoterpenoid indole alkaloids (MIAs) natural products, important plant-derived pharmaceuticals used in the therapy of heart disorders. Catalyzes the conversion of 16-epivellosimine to vinorine, precursor of vomilenine, an intermediate chemical in the biosynthesis of ajmaline. Acts on gardneral, but not on polyneuridine aldehyde or N-methylgardneral. The sequence is that of Vinorine synthase from Rauvolfia serpentina (Serpentine wood).